The sequence spans 256 residues: Large ribosomal subunit protein uL2 (256 aa).

The disordered stretch occupies residues 208 to 230 (EHPHGGGNHQHIGKASTVKRGTS).

It belongs to the universal ribosomal protein uL2 family. In terms of tissue distribution, in larvae tissues examined: gut, brain imaginal disk, salivary glands, fat body, muscles, epidermis and trachaea.

The protein resides in the cytoplasm. The chain is Large ribosomal subunit protein uL2 (RpL8) from Drosophila melanogaster (Fruit fly).